A 203-amino-acid polypeptide reads, in one-letter code: Holliday junction branch migration complex subunit RuvA (203 aa).

Residues 1–63 (MIFSVRGEVL…EDSMTLYGFS (63 aa)) are domain I. The interval 64–141 (DAENRDLFLA…GPVGASGLTV (78 aa)) is domain II. The interval 141–145 (VGTAA) is flexible linker. Positions 146–203 (DGNAVRGSVVEALVGLGFAAKQAEEATDQVLDGELGKDGAVATSSALRAALSLLGKTR) are domain III.

This sequence belongs to the RuvA family. As to quaternary structure, homotetramer. Forms an RuvA(8)-RuvB(12)-Holliday junction (HJ) complex. HJ DNA is sandwiched between 2 RuvA tetramers; dsDNA enters through RuvA and exits via RuvB. An RuvB hexamer assembles on each DNA strand where it exits the tetramer. Each RuvB hexamer is contacted by two RuvA subunits (via domain III) on 2 adjacent RuvB subunits; this complex drives branch migration. In the full resolvosome a probable DNA-RuvA(4)-RuvB(12)-RuvC(2) complex forms which resolves the HJ.

It is found in the cytoplasm. The RuvA-RuvB-RuvC complex processes Holliday junction (HJ) DNA during genetic recombination and DNA repair, while the RuvA-RuvB complex plays an important role in the rescue of blocked DNA replication forks via replication fork reversal (RFR). RuvA specifically binds to HJ cruciform DNA, conferring on it an open structure. The RuvB hexamer acts as an ATP-dependent pump, pulling dsDNA into and through the RuvAB complex. HJ branch migration allows RuvC to scan DNA until it finds its consensus sequence, where it cleaves and resolves the cruciform DNA. This chain is Holliday junction branch migration complex subunit RuvA, found in Mycobacterium leprae (strain Br4923).